The chain runs to 198 residues: Segregation and condensation protein B (198 aa).

Residues 168–198 are disordered; it reads KLADPATDEPDQNEMDLFFDRFNQSKEQEEE.

This sequence belongs to the ScpB family. As to quaternary structure, homodimer. Homodimerization may be required to stabilize the binding of ScpA to the Smc head domains. Component of a cohesin-like complex composed of ScpA, ScpB and the Smc homodimer, in which ScpA and ScpB bind to the head domain of Smc. The presence of the three proteins is required for the association of the complex with DNA.

It is found in the cytoplasm. Participates in chromosomal partition during cell division. May act via the formation of a condensin-like complex containing Smc and ScpA that pull DNA away from mid-cell into both cell halves. The chain is Segregation and condensation protein B from Listeria monocytogenes serovar 1/2a (strain ATCC BAA-679 / EGD-e).